The chain runs to 1150 residues: ATP-dependent helicase/deoxyribonuclease subunit B (1150 aa).

8–15 (GRAGSGKS) contacts ATP. [4Fe-4S] cluster-binding residues include C786, C1106, C1109, and C1115.

It belongs to the helicase family. AddB/RexB type 1 subfamily. Heterodimer of AddA and AddB. Mg(2+) is required as a cofactor. The cofactor is [4Fe-4S] cluster.

In terms of biological role, the heterodimer acts as both an ATP-dependent DNA helicase and an ATP-dependent, dual-direction single-stranded exonuclease. Recognizes the chi site generating a DNA molecule suitable for the initiation of homologous recombination. The AddB subunit has 5' -&gt; 3' nuclease activity but not helicase activity. This chain is ATP-dependent helicase/deoxyribonuclease subunit B, found in Clostridium botulinum (strain Okra / Type B1).